We begin with the raw amino-acid sequence, 218 residues long: GTP cyclohydrolase 1 (218 aa).

Residues Cys-107, His-110, and Cys-178 each contribute to the Zn(2+) site.

The protein belongs to the GTP cyclohydrolase I family. Homomer.

It catalyses the reaction GTP + H2O = 7,8-dihydroneopterin 3'-triphosphate + formate + H(+). It participates in cofactor biosynthesis; 7,8-dihydroneopterin triphosphate biosynthesis; 7,8-dihydroneopterin triphosphate from GTP: step 1/1. This chain is GTP cyclohydrolase 1, found in Azorhizobium caulinodans (strain ATCC 43989 / DSM 5975 / JCM 20966 / LMG 6465 / NBRC 14845 / NCIMB 13405 / ORS 571).